The sequence spans 317 residues: uncharacterized protein (317 aa).

The HTH lysR-type domain occupies 29–86 (IDLNLLTIFEAVYVHKGIVNAAKVLNLTPSAISQSIQKLRVIFPDPLFIRKGQGVTPT). Residues 46–65 (IVNAAKVLNLTPSAISQSIQ) constitute a DNA-binding region (H-T-H motif).

It belongs to the LysR transcriptional regulatory family.

This is an uncharacterized protein from Escherichia coli (strain K12).